The sequence spans 180 residues: ATP-dependent protease subunit HslV (180 aa).

T7 is a catalytic residue. Residues A163, C166, and T169 each contribute to the Na(+) site.

The protein belongs to the peptidase T1B family. HslV subfamily. In terms of assembly, a double ring-shaped homohexamer of HslV is capped on each side by a ring-shaped HslU homohexamer. The assembly of the HslU/HslV complex is dependent on binding of ATP.

It is found in the cytoplasm. The enzyme catalyses ATP-dependent cleavage of peptide bonds with broad specificity.. Allosterically activated by HslU binding. Functionally, protease subunit of a proteasome-like degradation complex believed to be a general protein degrading machinery. In Cytophaga hutchinsonii (strain ATCC 33406 / DSM 1761 / CIP 103989 / NBRC 15051 / NCIMB 9469 / D465), this protein is ATP-dependent protease subunit HslV.